The sequence spans 167 residues: Leptin (167 aa).

Positions 1–21 (MHWGTLCGFLWLWPYLFYVQA) are cleaved as a signal peptide. Cys117 and Cys167 are joined by a disulfide.

The protein belongs to the leptin family. As to quaternary structure, interacts with SIGLEC6. Adipose tissue is the main source of leptin. It is also produced by other peripheral tissues such as the skeletal muscle. Expressed by intercalated and striated tracts of submandibular and parotid salivary gland intralobular ducts. Detected by fundic epithelium of the gastric mucosa. Secreted into blood and gastric juice.

The protein localises to the secreted. In terms of biological role, key player in the regulation of energy balance and body weight control. Once released into the circulation, has central and peripheral effects by binding LEPR, found in many tissues, which results in the activation of several major signaling pathways. In the hypothalamus, acts as an appetite-regulating factor that induces a decrease in food intake and an increase in energy consumption by inducing anorexinogenic factors and suppressing orexigenic neuropeptides, also regulates bone mass and secretion of hypothalamo-pituitary-adrenal hormones. In the periphery, increases basal metabolism, influences reproductive function, regulates pancreatic beta-cell function and insulin secretion, is pro-angiogenic for endothelial cell and affects innate and adaptive immunity. In the arcuate nucleus of the hypothalamus, activates by depolarization POMC neurons inducing FOS and SOCS3 expression to release anorexigenic peptides and inhibits by hyperpolarization NPY neurons inducing SOCS3 with a consequent reduction on release of orexigenic peptides. In addition to its known satiety inducing effect, has a modulatory role in nutrient absorption. In the intestine, reduces glucose absorption by enterocytes by activating PKC and leading to a sequential activation of p38, PI3K and ERK signaling pathways which exerts an inhibitory effect on glucose absorption. Acts as a growth factor on certain tissues, through the activation of different signaling pathways increases expression of genes involved in cell cycle regulation such as CCND1, via JAK2-STAT3 pathway, or VEGFA, via MAPK1/3 and PI3K-AKT1 pathways. May also play an apoptotic role via JAK2-STAT3 pathway and up-regulation of BIRC5 expression. Pro-angiogenic, has mitogenic activity on vascular endothelial cells and plays a role in matrix remodeling by regulating the expression of matrix metalloproteinases (MMPs) and tissue inhibitors of metalloproteinases (TIMPs). In innate immunity, modulates the activity and function of neutrophils by increasing chemotaxis and the secretion of oxygen radicals. Increases phagocytosis by macrophages and enhances secretion of pro-inflammatory mediators. Increases cytotoxic ability of NK cells. Plays a pro-inflammatory role, in synergy with IL1B, by inducing NOS2 which promotes the production of IL6, IL8 and Prostaglandin E2, through a signaling pathway that involves JAK2, PI3K, MAP2K1/MEK1 and MAPK14/p38. In adaptive immunity, promotes the switch of memory T-cells towards T helper-1 cell immune responses. Increases CD4(+)CD25(-) T-cell proliferation and reduces autophagy during TCR (T-cell receptor) stimulation, through MTOR signaling pathway activation and BCL2 up-regulation. The chain is Leptin from Homo sapiens (Human).